Consider the following 341-residue polypeptide: Phenylalanine--tRNA ligase alpha subunit (341 aa).

Glutamate 254 serves as a coordination point for Mg(2+).

The protein belongs to the class-II aminoacyl-tRNA synthetase family. Phe-tRNA synthetase alpha subunit type 1 subfamily. As to quaternary structure, tetramer of two alpha and two beta subunits. Mg(2+) is required as a cofactor.

It is found in the cytoplasm. It carries out the reaction tRNA(Phe) + L-phenylalanine + ATP = L-phenylalanyl-tRNA(Phe) + AMP + diphosphate + H(+). The polypeptide is Phenylalanine--tRNA ligase alpha subunit (pheS) (Mycoplasma pneumoniae (strain ATCC 29342 / M129 / Subtype 1) (Mycoplasmoides pneumoniae)).